A 173-amino-acid chain; its full sequence is Crossover junction endodeoxyribonuclease RuvC (173 aa).

Catalysis depends on residues Asp-8, Glu-67, and Asp-139. Positions 8, 67, and 139 each coordinate Mg(2+).

Belongs to the RuvC family. As to quaternary structure, homodimer which binds Holliday junction (HJ) DNA. The HJ becomes 2-fold symmetrical on binding to RuvC with unstacked arms; it has a different conformation from HJ DNA in complex with RuvA. In the full resolvosome a probable DNA-RuvA(4)-RuvB(12)-RuvC(2) complex forms which resolves the HJ. Requires Mg(2+) as cofactor.

Its subcellular location is the cytoplasm. The enzyme catalyses Endonucleolytic cleavage at a junction such as a reciprocal single-stranded crossover between two homologous DNA duplexes (Holliday junction).. In terms of biological role, the RuvA-RuvB-RuvC complex processes Holliday junction (HJ) DNA during genetic recombination and DNA repair. Endonuclease that resolves HJ intermediates. Cleaves cruciform DNA by making single-stranded nicks across the HJ at symmetrical positions within the homologous arms, yielding a 5'-phosphate and a 3'-hydroxyl group; requires a central core of homology in the junction. The consensus cleavage sequence is 5'-(A/T)TT(C/G)-3'. Cleavage occurs on the 3'-side of the TT dinucleotide at the point of strand exchange. HJ branch migration catalyzed by RuvA-RuvB allows RuvC to scan DNA until it finds its consensus sequence, where it cleaves and resolves the cruciform DNA. In Vibrio vulnificus (strain YJ016), this protein is Crossover junction endodeoxyribonuclease RuvC.